Here is a 244-residue protein sequence, read N- to C-terminus: Phosphoadenosine 5'-phosphosulfate reductase (244 aa).

C239 serves as the catalytic Nucleophile; cysteine thiosulfonate intermediate.

It belongs to the PAPS reductase family. CysH subfamily.

It localises to the cytoplasm. It carries out the reaction [thioredoxin]-disulfide + sulfite + adenosine 3',5'-bisphosphate + 2 H(+) = [thioredoxin]-dithiol + 3'-phosphoadenylyl sulfate. It participates in sulfur metabolism; hydrogen sulfide biosynthesis; sulfite from sulfate: step 3/3. Its function is as follows. Catalyzes the formation of sulfite from phosphoadenosine 5'-phosphosulfate (PAPS) using thioredoxin as an electron donor. The sequence is that of Phosphoadenosine 5'-phosphosulfate reductase from Salmonella heidelberg (strain SL476).